Reading from the N-terminus, the 247-residue chain is 6-carboxyhexanoate--CoA ligase (247 aa).

It belongs to the BioW family. In terms of assembly, homodimer. Mg(2+) serves as cofactor.

It carries out the reaction heptanedioate + ATP + CoA = 6-carboxyhexanoyl-CoA + AMP + diphosphate. It functions in the pathway metabolic intermediate metabolism; pimeloyl-CoA biosynthesis; pimeloyl-CoA from pimelate: step 1/1. Its function is as follows. Catalyzes the transformation of pimelate into pimeloyl-CoA with concomitant hydrolysis of ATP to AMP. This Corynebacterium diphtheriae (strain ATCC 700971 / NCTC 13129 / Biotype gravis) protein is 6-carboxyhexanoate--CoA ligase.